Here is a 309-residue protein sequence, read N- to C-terminus: Flavonol sulfotransferase-like (309 aa).

3'-phosphoadenylyl sulfate is bound at residue 59–64 (KTGTTW). The active-site Proton acceptor is the His-119. 3'-phosphoadenylyl sulfate-binding positions include Arg-141, Ser-149, Tyr-207, and 274–276 (RKG).

The protein belongs to the sulfotransferase 1 family.

It localises to the cytoplasm. The protein is Flavonol sulfotransferase-like of Flaveria bidentis (Coastal plain yellowtops).